Reading from the N-terminus, the 538-residue chain is Chaperonin GroEL (538 aa).

ATP is bound by residues 29–32 (TLGP), 86–90 (DGTTT), Gly413, 479–481 (DAL), and Asp495.

Belongs to the chaperonin (HSP60) family. In terms of assembly, forms a cylinder of 14 subunits composed of two heptameric rings stacked back-to-back. Interacts with the co-chaperonin GroES.

It is found in the cytoplasm. The catalysed reaction is ATP + H2O + a folded polypeptide = ADP + phosphate + an unfolded polypeptide.. In terms of biological role, together with its co-chaperonin GroES, plays an essential role in assisting protein folding. The GroEL-GroES system forms a nano-cage that allows encapsulation of the non-native substrate proteins and provides a physical environment optimized to promote and accelerate protein folding. This chain is Chaperonin GroEL, found in Thermotoga neapolitana.